The sequence spans 221 residues: Catechol O-methyltransferase (221 aa).

S-adenosyl-L-methionine contacts are provided by valine 41, glycine 65, leucine 67, serine 71, glutamate 89, histidine 94, alanine 118, and aspartate 139. Residues aspartate 139, aspartate 165, and asparagine 166 each contribute to the Mg(2+) site.

This sequence belongs to the class I-like SAM-binding methyltransferase superfamily. Cation-dependent O-methyltransferase family. Homodimer. The cofactor is Mg(2+).

It carries out the reaction a catechol + S-adenosyl-L-methionine = a guaiacol + S-adenosyl-L-homocysteine + H(+). With respect to regulation, the metal ion affects the meta and para-regiospecificity of the enzyme as well as the enzyme activity and thermal stability. Functionally, catechol O-methyltransferase that can use various catechol-like compounds. Can produce vanillic acid (meta-form) and iso-vanillic acid (para-form) from protocatechuic acid (PCA). Does not have a regiospecificity, and produces the meta- and para-forms of the products in equal proportion. This chain is Catechol O-methyltransferase, found in Niastella koreensis (strain DSM 17620 / KACC 11465 / NBRC 106392 / GR20-10).